The chain runs to 280 residues: Undecaprenyl-diphosphatase (280 aa).

Transmembrane regions (helical) follow at residues 2–22 (FIIE…TEWL), 45–65 (AFME…VVVI), 86–106 (WQLW…GLFL), 114–134 (FYNL…FIYL), 147–167 (LASL…LALF), 188–208 (SVVT…ASGW), 223–243 (GQIF…LVVI), and 255–275 (FTIF…YAAI).

Belongs to the UppP family.

It is found in the cell membrane. The enzyme catalyses di-trans,octa-cis-undecaprenyl diphosphate + H2O = di-trans,octa-cis-undecaprenyl phosphate + phosphate + H(+). Functionally, catalyzes the dephosphorylation of undecaprenyl diphosphate (UPP). Confers resistance to bacitracin. This chain is Undecaprenyl-diphosphatase, found in Streptococcus sanguinis (strain SK36).